The sequence spans 906 residues: Protein translocase subunit SecA (906 aa).

Residues glutamine 87, 105–109, and aspartate 512 each bind ATP; that span reads GEGKT. Positions 839–896 are disordered; sequence LEEQQRQQSEAAPRTYTHATAESQLADEEAAGEEGHTTFVRDEQKIGRNDPCPCGSGK. The span at 871–886 shows a compositional bias: basic and acidic residues; the sequence is EEGHTTFVRDEQKIGR. Residues cysteine 890, cysteine 892, cysteine 901, and histidine 902 each coordinate Zn(2+).

Belongs to the SecA family. In terms of assembly, monomer and homodimer. Part of the essential Sec protein translocation apparatus which comprises SecA, SecYEG and auxiliary proteins SecDF-YajC and YidC. Requires Zn(2+) as cofactor.

The protein resides in the cell inner membrane. The protein localises to the cytoplasm. It catalyses the reaction ATP + H2O + cellular proteinSide 1 = ADP + phosphate + cellular proteinSide 2.. Functionally, part of the Sec protein translocase complex. Interacts with the SecYEG preprotein conducting channel. Has a central role in coupling the hydrolysis of ATP to the transfer of proteins into and across the cell membrane, serving both as a receptor for the preprotein-SecB complex and as an ATP-driven molecular motor driving the stepwise translocation of polypeptide chains across the membrane. The sequence is that of Protein translocase subunit SecA from Aeromonas salmonicida (strain A449).